The following is a 1347-amino-acid chain: Spermatogenesis-associated protein 31A3 (1347 aa).

Residues 23–43 (PWVLDIFLTLVFALGFFFLLL) form a helical membrane-spanning segment. Disordered stretches follow at residues 55-87 (PSPS…GREC), 108-142 (HLDK…HEPM), 154-235 (SPDP…STLI), 373-397 (EQDT…GPQK), 627-658 (QDES…EAQK), 900-955 (RGIP…REAV), 1084-1161 (VHEE…PSVS), and 1313-1335 (KAVS…SHHH). Residues 60 to 82 (GKRKCPVGRRRRPRGRMKNHSLR) are compositionally biased toward basic residues. Residues 165-178 (LASTPSPGPMTTSV) show a composition bias toward polar residues. A compositionally biased stretch (pro residues) spans 198–211 (PEPPALFPHPPHTP). Polar residues-rich tracts occupy residues 627-651 (QDES…STGE) and 927-948 (LTYS…SSKA). Composition is skewed to basic and acidic residues over residues 1108 to 1127 (HKSE…RLEG) and 1137 to 1146 (RKTEDTHQDE).

The protein belongs to the SPATA31 family.

Its subcellular location is the membrane. Functionally, may play a role in spermatogenesis. The protein is Spermatogenesis-associated protein 31A3 (SPATA31A3) of Homo sapiens (Human).